Reading from the N-terminus, the 606-residue chain is Urocanate reductase (606 aa).

The segment at residues 1 to 40 (MSNLSRRNFITGGAIAALGGTLAIAGCAPKGESSSTVAGA) is a signal peptide (tat-type signal). Residue Thr-111 is modified to FMN phosphoryl threonine. Residues Ala-163, Glu-182, Thr-191, Gly-195, Gly-196, Ala-197, Ala-305, and Asp-373 each coordinate FAD. Arg-433 (proton donor) is an active-site residue. Glu-572 and Ile-588 together coordinate FAD.

Belongs to the FAD-dependent oxidoreductase 2 family. FRD/SDH subfamily. FAD serves as cofactor. Requires FMN as cofactor. In terms of processing, predicted to be exported by the Tat system. The position of the signal peptide cleavage has not been experimentally proven.

The catalysed reaction is dihydrourocanate + A = urocanate + AH2. Its function is as follows. Catalyzes the two-electron reduction of urocanate to dihydrourocanate (also named imidazole propionate or deamino-histidine). Dihydrourocanate is present at higher concentrations in subjects with type 2 diabetes, and directly impairs glucose tolerance and insulin signaling at the level of insulin receptor substrate (IRS) through activation of p38 gamma (MAPK12)-p62-mTORC1. Therefore, the UrdA enzyme from the gut bacteria E.lenta strain DSM 2243 may contribute to the pathogenesis of type 2 diabetes by producing the microbial metabolite dihydrourocanate. The chain is Urocanate reductase from Eggerthella lenta (strain ATCC 25559 / DSM 2243 / CCUG 17323 / JCM 9979 / KCTC 3265 / NCTC 11813 / VPI 0255 / 1899 B) (Eubacterium lentum).